An 86-amino-acid chain; its full sequence is Anti-adapter protein IraP (86 aa).

A coiled-coil region spans residues 1–38 (MKNLIAELLVKLAQKEEEAKELTVQVEALEIVVTALLR).

Belongs to the IraP family. In terms of assembly, interacts with RssB.

It is found in the cytoplasm. Functionally, inhibits RpoS proteolysis by regulating RssB activity, thereby increasing the stability of the sigma stress factor RpoS especially during phosphate starvation, but also in stationary phase and during nitrogen starvation. Its effect on RpoS stability is due to its interaction with RssB, which probably blocks the interaction of RssB with RpoS, and the consequent delivery of the RssB-RpoS complex to the ClpXP protein degradation pathway. The protein is Anti-adapter protein IraP of Klebsiella pneumoniae subsp. pneumoniae (strain ATCC 700721 / MGH 78578).